Here is a 289-residue protein sequence, read N- to C-terminus: MNNRDNLHRFLFEEAKIRGELVQLDASWRAVLACHDYPAVVQSQLGQALAATILLSATIKFKGSLILQTQSEGPLQTLVAQATHHRTLRGLARWDGDVPHGSLSETYGSGRLALTIQTEGKNPYQGIVSLEGVNLAEALQTYFSRSEQLRTRLWLVADEQQAVGLFLQELPSQQGHKTDWERIALLASTVTTQEMLSLPSTELLYRLFNEEQVRLFEPEPVSFRCGCSRGRIEQTLAALGREEMESILKEQGIIEVDCEFCNRHYNFDRVDMEQLFTEQVKAPVTSTRH.

Cystine bridges form between Cys-225-Cys-227 and Cys-258-Cys-261.

It belongs to the HSP33 family. Under oxidizing conditions two disulfide bonds are formed involving the reactive cysteines. Under reducing conditions zinc is bound to the reactive cysteines and the protein is inactive.

It is found in the cytoplasm. Redox regulated molecular chaperone. Protects both thermally unfolding and oxidatively damaged proteins from irreversible aggregation. Plays an important role in the bacterial defense system toward oxidative stress. The polypeptide is 33 kDa chaperonin (Nitrosococcus oceani (strain ATCC 19707 / BCRC 17464 / JCM 30415 / NCIMB 11848 / C-107)).